A 376-amino-acid polypeptide reads, in one-letter code: Pulmonary surfactant-associated protein B (376 aa).

An N-terminal signal peptide occupies residues 1-24 (MAKLHLQWLLLLPTLCSLGAATES). A Saposin A-type domain is found at 25 to 63 (ASSPDCAQGPKFWCQSLEQAIQCRALGHCLQEVWGHAGA). A propeptide spanning residues 25-190 (ASSPDCAQGP…PHTQDLSEQQ (166 aa)) is cleaved from the precursor. Saposin B-type domains are found at residues 63–145 (ANDL…PLGQ), 194–271 (PLPF…STAD), and 290–365 (QDTE…EAPA). Disulfide bonds link Cys67-Cys141, Cys70-Cys135, Cys98-Cys110, Cys198-Cys267, Cys201-Cys261, Cys225-Cys236, Cys294-Cys361, Cys297-Cys355, and Cys320-Cys330. Residues 270 to 376 (ADAIGPALPA…PLQCFQTPHL (107 aa)) constitute a propeptide that is removed on maturation. N-linked (GlcNAc...) asparagine glycosylation is present at Asn306.

Homodimer; disulfide-linked.

It localises to the secreted. The protein localises to the extracellular space. Its subcellular location is the surface film. Pulmonary surfactant-associated proteins promote alveolar stability by lowering the surface tension at the air-liquid interface in the peripheral air spaces. SP-B increases the collapse pressure of palmitic acid to nearly 70 millinewtons per meter. This Rattus norvegicus (Rat) protein is Pulmonary surfactant-associated protein B (Sftpb).